We begin with the raw amino-acid sequence, 346 residues long: N-acetyl-gamma-glutamyl-phosphate reductase (346 aa).

The active site involves cysteine 150.

It belongs to the NAGSA dehydrogenase family. Type 1 subfamily.

The protein resides in the cytoplasm. The catalysed reaction is N-acetyl-L-glutamate 5-semialdehyde + phosphate + NADP(+) = N-acetyl-L-glutamyl 5-phosphate + NADPH + H(+). It functions in the pathway amino-acid biosynthesis; L-arginine biosynthesis; N(2)-acetyl-L-ornithine from L-glutamate: step 3/4. Functionally, catalyzes the NADPH-dependent reduction of N-acetyl-5-glutamyl phosphate to yield N-acetyl-L-glutamate 5-semialdehyde. This Acetivibrio thermocellus (strain ATCC 27405 / DSM 1237 / JCM 9322 / NBRC 103400 / NCIMB 10682 / NRRL B-4536 / VPI 7372) (Clostridium thermocellum) protein is N-acetyl-gamma-glutamyl-phosphate reductase.